The primary structure comprises 441 residues: Xylose isomerase (441 aa).

Catalysis depends on residues His-100 and Asp-103. Residues Glu-231, Glu-267, His-270, Asp-295, Asp-306, Asp-308, and Asp-338 each contribute to the Mg(2+) site.

It belongs to the xylose isomerase family. In terms of assembly, homotetramer. The cofactor is Mg(2+).

It localises to the cytoplasm. It catalyses the reaction alpha-D-xylose = alpha-D-xylulofuranose. This Paraburkholderia phymatum (strain DSM 17167 / CIP 108236 / LMG 21445 / STM815) (Burkholderia phymatum) protein is Xylose isomerase.